We begin with the raw amino-acid sequence, 327 residues long: Glycerol-3-phosphate dehydrogenase [NAD(P)+] (327 aa).

NADPH is bound by residues tryptophan 16, arginine 36, and lysine 108. Lysine 108, glycine 136, and serine 138 together coordinate sn-glycerol 3-phosphate. Alanine 140 serves as a coordination point for NADPH. 5 residues coordinate sn-glycerol 3-phosphate: lysine 191, aspartate 244, serine 254, arginine 255, and asparagine 256. Residue lysine 191 is the Proton acceptor of the active site. Residue arginine 255 coordinates NADPH. Leucine 274 and glutamate 276 together coordinate NADPH.

Belongs to the NAD-dependent glycerol-3-phosphate dehydrogenase family.

The protein resides in the cytoplasm. The catalysed reaction is sn-glycerol 3-phosphate + NAD(+) = dihydroxyacetone phosphate + NADH + H(+). The enzyme catalyses sn-glycerol 3-phosphate + NADP(+) = dihydroxyacetone phosphate + NADPH + H(+). The protein operates within membrane lipid metabolism; glycerophospholipid metabolism. Catalyzes the reduction of the glycolytic intermediate dihydroxyacetone phosphate (DHAP) to sn-glycerol 3-phosphate (G3P), the key precursor for phospholipid synthesis. The protein is Glycerol-3-phosphate dehydrogenase [NAD(P)+] of Bradyrhizobium sp. (strain ORS 278).